The following is a 205-amino-acid chain: Glycerol-3-phosphate acyltransferase (205 aa).

Transmembrane regions (helical) follow at residues 4–24 (IAPG…AILV), 80–100 (PFWL…PVFF), 107–127 (GVAT…GVMA), 130–150 (WLLT…SALI), and 155–175 (VWWF…LILL).

This sequence belongs to the PlsY family. As to quaternary structure, probably interacts with PlsX.

The protein localises to the cell inner membrane. It catalyses the reaction an acyl phosphate + sn-glycerol 3-phosphate = a 1-acyl-sn-glycero-3-phosphate + phosphate. Its pathway is lipid metabolism; phospholipid metabolism. In terms of biological role, catalyzes the transfer of an acyl group from acyl-phosphate (acyl-PO(4)) to glycerol-3-phosphate (G3P) to form lysophosphatidic acid (LPA). This enzyme utilizes acyl-phosphate as fatty acyl donor, but not acyl-CoA or acyl-ACP. The polypeptide is Glycerol-3-phosphate acyltransferase (Klebsiella pneumoniae (strain 342)).